Consider the following 550-residue polypeptide: Tyrosine-protein phosphatase 1 (550 aa).

In terms of domain architecture, Tyrosine-protein phosphatase spans 260–539 (LYQKFLRLQS…KYVYDLIDSL (280 aa)). S318 and S320 each carry phosphoserine. C470 functions as the Phosphocysteine intermediate in the catalytic mechanism.

Belongs to the protein-tyrosine phosphatase family. Non-receptor class subfamily.

It localises to the cytoplasm. The catalysed reaction is O-phospho-L-tyrosyl-[protein] + H2O = L-tyrosyl-[protein] + phosphate. In terms of biological role, plays a role in inhibiting the onset of mitosis. Dephosphorylates sty1/spc1 and wis1/spc2/sty2. In Schizosaccharomyces pombe (strain 972 / ATCC 24843) (Fission yeast), this protein is Tyrosine-protein phosphatase 1 (pyp1).